Consider the following 469-residue polypeptide: 3-isopropylmalate dehydratase large subunit (469 aa).

Positions 349, 410, and 413 each coordinate [4Fe-4S] cluster.

The protein belongs to the aconitase/IPM isomerase family. LeuC type 1 subfamily. As to quaternary structure, heterodimer of LeuC and LeuD. [4Fe-4S] cluster is required as a cofactor.

The enzyme catalyses (2R,3S)-3-isopropylmalate = (2S)-2-isopropylmalate. It participates in amino-acid biosynthesis; L-leucine biosynthesis; L-leucine from 3-methyl-2-oxobutanoate: step 2/4. Functionally, catalyzes the isomerization between 2-isopropylmalate and 3-isopropylmalate, via the formation of 2-isopropylmaleate. The protein is 3-isopropylmalate dehydratase large subunit of Neisseria meningitidis serogroup C / serotype 2a (strain ATCC 700532 / DSM 15464 / FAM18).